Here is a 473-residue protein sequence, read N- to C-terminus: Glutamate--tRNA ligase 1 (473 aa).

The 'HIGH' region signature appears at 11-21; sequence PSPTGYLHIGG. Residues 113–133 are compositionally biased toward basic and acidic residues; sequence KARAEGRPPRYDGRWRDRDPS. Residues 113-136 form a disordered region; the sequence is KARAEGRPPRYDGRWRDRDPSEAP. Residues 240 to 244 carry the 'KMSKS' region motif; the sequence is KLSKR. Residue K243 coordinates ATP.

It belongs to the class-I aminoacyl-tRNA synthetase family. Glutamate--tRNA ligase type 1 subfamily. In terms of assembly, monomer.

It localises to the cytoplasm. The enzyme catalyses tRNA(Glu) + L-glutamate + ATP = L-glutamyl-tRNA(Glu) + AMP + diphosphate. Its function is as follows. Catalyzes the attachment of glutamate to tRNA(Glu) in a two-step reaction: glutamate is first activated by ATP to form Glu-AMP and then transferred to the acceptor end of tRNA(Glu). This is Glutamate--tRNA ligase 1 from Brucella melitensis biotype 1 (strain ATCC 23456 / CCUG 17765 / NCTC 10094 / 16M).